Reading from the N-terminus, the 134-residue chain is MSRMYETIYIVQPDLGDEEIKALSTKVQDVIASMNGDFKRVEDWGTRKLAYPINKNPRGRYFYLRFDGDSGLIAELERRLRLDDKVIRYQSVKLETEVVAPAAAPVKSAEEGTEEVAAEAATEAPAETTTTVEG.

The tract at residues 103–134 is disordered; it reads AAPVKSAEEGTEEVAAEAATEAPAETTTTVEG. Over residues 118–134 the composition is skewed to low complexity; sequence AEAATEAPAETTTTVEG.

Belongs to the bacterial ribosomal protein bS6 family.

In terms of biological role, binds together with bS18 to 16S ribosomal RNA. This chain is Small ribosomal subunit protein bS6, found in Citrifermentans bemidjiense (strain ATCC BAA-1014 / DSM 16622 / JCM 12645 / Bem) (Geobacter bemidjiensis).